A 375-amino-acid chain; its full sequence is UDP-4-amino-4,6-dideoxy-N-acetyl-beta-L-altrosamine transaminase (375 aa).

Residues tyrosine 6, 26 to 29 (KQLT), alanine 56, and serine 178 contribute to the substrate site. Lysine 183 is modified (N6-(pyridoxal phosphate)lysine). Substrate is bound by residues asparagine 228 and 313–316 (QVHY).

This sequence belongs to the DegT/DnrJ/EryC1 family.

The enzyme catalyses UDP-4-amino-4,6-dideoxy-N-acetyl-beta-L-altrosamine + 2-oxoglutarate = UDP-2-acetamido-2,6-dideoxy-beta-L-arabino-hex-4-ulose + L-glutamate. In terms of biological role, catalyzes the second step in the biosynthesis of pseudaminic acid, a sialic-acid-like sugar that is used to modify flagellin. Uses UDP-2-acetamido-2,6-dideoxy-beta-L-arabino-4-hexulose as substrate producing UDP-4-amino-4,6-dideoxy-beta-L-AltNAc. This is UDP-4-amino-4,6-dideoxy-N-acetyl-beta-L-altrosamine transaminase (pseC) from Helicobacter pylori (strain ATCC 700392 / 26695) (Campylobacter pylori).